The sequence spans 780 residues: Carboxysome assembly protein CsoS2 (780 aa).

Residues 1 to 15 (MARLSSRELALERRK) show a composition bias toward basic and acidic residues. Disordered stretches follow at residues 1 to 173 (MARL…RAIE), 189 to 212 (KHGKTAGKQPTSAAAVARQANPDL), 226 to 281 (TKAG…NRSV), 330 to 349 (NRVTGNEVGRSEKVTGDEPG), and 382 to 444 (SLTQ…TGVT). Residues 5–24 (SSRELALERRKALTTSGKKS) form an N-repeat 1 repeat. The span at 48–78 (AAAAVEPTAPAVSAPVKPTVSFTPASPSSSS) shows a compositional bias: low complexity. Residues 86-105 (PSRDLVLARRDALSRRGKTA) form an N-repeat 2 repeat. The segment covering 86-116 (PSRDLVLARRDALSRRGKTADTSRDRNRADV) has biased composition (basic and acidic residues). Low complexity predominate over residues 117–130 (ARQTQAAAPVAASA). N-repeat repeat units follow at residues 175 to 194 (PSRALVLARREAMAKHGKTA) and 213 to 235 (TSRELAQQVRELRTKAGARNKQS). M-repeat repeat units lie at residues 260–309 (KVGE…QTFC), 320–369 (KVRV…AAYC), 378–417 (KVGHSLTQQGRPVSGVMVGRSSSVTGDEAGAGRSLTGDQY), 431–480 (KVGQ…NAFC), 490–535 (KVGF…LENA), and 541–599 (TSAV…ATAC). The segment at 260–608 (KVGESTTSTG…CGNEAPAGTD (349 aa)) is middle region. The span at 264-276 (STTSTGQTVTGTQ) shows a compositional bias: low complexity. Low complexity-rich tracts occupy residues 387–403 (GRPVSGVMVGRSSSVTG) and 432–444 (VGQSGTLSGTGVT). Residues 609 to 749 (SHGQAPEGAA…ATVPHERKRN (141 aa)) are C-terminal domain. C-repeat repeat units follow at residues 623-669 (SVMS…TEQF) and 693-726 (EQPASRVTGEGSSTKITGDDWDRGEHVTGTEGVS). 2 disordered regions span residues 631 to 661 (AQQQRDDQGAVTGTSYEQGNRITGPFDLAGG) and 686 to 780 (AVVS…GARG). Residues 641 to 651 (VTGTSYEQGNR) are compositionally biased toward polar residues. Basic and acidic residues predominate over residues 709 to 720 (TGDDWDRGEHVT). The segment at 750-780 (EENEWPVSRVTGSSGNTEKGSLITVSGGARG) is C-terminal peptide. Over residues 759-768 (VTGSSGNTEK) the composition is skewed to polar residues.

The protein belongs to the CsoS2 family. In terms of assembly, interacts via its N-terminal repeats with RuBisCO. Interacts with the major shell protein CsoS1. In terms of processing, unlike H.neapolitanus and predictions for P.marinus strain MIT 9313, this protein is not thought to have ribosomal frameshifting.

Its function is as follows. Required for alpha-carboxysome (Cb) assembly, mediates interaction between RuBisCO and the carboxysome shell. The protein is probably intrinsically disordered. The C-terminal repeats act as the encapsulation signal to target proteins to the Cb; they are necessary and sufficient to target both CsoS2 and foreign proteins to the Cb. The N-terminal repeats of this protein bind simultaneously to both subunits of RuBisCO. Probably also interacts with the major shell proteins (CsoS1); that interaction would increase the local concentration of CsoS2 so that it can condense RuBisCO and full carboxysomes can be formed. The polypeptide is Carboxysome assembly protein CsoS2 (Parasynechococcus marenigrum (strain WH8102)).